A 532-amino-acid polypeptide reads, in one-letter code: Protein tweety homolog 2 (532 aa).

At M1–S44 the chain is on the extracellular side. A helical membrane pass occupies residues L45–V65. Residues Y66–C87 are Cytoplasmic-facing. The helical transmembrane segment at C88–F108 threads the bilayer. Over Y109–W213 the chain is Extracellular. Ca(2+) contacts are provided by E113 and D116. An N-linked (GlcNAc...) asparagine glycan is attached at N129. Residues R164–D166 carry the RGD motif. Residue T199 is modified to Phosphothreonine. The helical transmembrane segment at L214–L234 threads the bilayer. Residues A235–C240 lie on the Cytoplasmic side of the membrane. Residues L241 to A261 form a helical membrane-spanning segment. At A262–G385 the chain is on the extracellular side. 2 cysteine pairs are disulfide-bonded: C274/C382 and C300/C367. N283 and N352 each carry an N-linked (GlcNAc...) asparagine glycan. Residues I386 to L406 traverse the membrane as a helical segment. Topologically, residues T407 to S532 are cytoplasmic. Position 504 is a phosphoserine (S504). Residues P506–Y509 carry the PY-motif; mediates interaction with NEDD4L motif.

The protein belongs to the tweety family. Forms cis-homodimers in the presence of Ca(+2) and forms monomers and trans-dimers in the absence of Ca(2+). Interacts with NEDD4L. Post-translationally, ubiquitinated by NEDD4L, leading to its proteasomal degradation.

Its subcellular location is the cell membrane. It carries out the reaction chloride(in) = chloride(out). It catalyses the reaction L-glutamate(out) = L-glutamate(in). Inhibited by (4-[(2-butyl-6,7-dichloro-2- cyclopentyl-2,3-dihydro-1-oxo-1H-inden-5-yl)oxy]butanoic acid). Its function is as follows. Calcium-independent, swelling-dependent volume-regulated anion channel (VRAC-swell) which plays a pivotal role in the process of regulatory volume decrease (RVD) in the brain through the efflux of anions like chloride and organic osmolytes like glutamate. Probable large-conductance Ca(2+)-activated chloride channel. The sequence is that of Protein tweety homolog 2 (Ttyh2) from Mus musculus (Mouse).